Consider the following 204-residue polypeptide: Leucyl/phenylalanyl-tRNA--protein transferase (204 aa).

This sequence belongs to the L/F-transferase family.

Its subcellular location is the cytoplasm. It carries out the reaction N-terminal L-lysyl-[protein] + L-leucyl-tRNA(Leu) = N-terminal L-leucyl-L-lysyl-[protein] + tRNA(Leu) + H(+). The enzyme catalyses N-terminal L-arginyl-[protein] + L-leucyl-tRNA(Leu) = N-terminal L-leucyl-L-arginyl-[protein] + tRNA(Leu) + H(+). It catalyses the reaction L-phenylalanyl-tRNA(Phe) + an N-terminal L-alpha-aminoacyl-[protein] = an N-terminal L-phenylalanyl-L-alpha-aminoacyl-[protein] + tRNA(Phe). In terms of biological role, functions in the N-end rule pathway of protein degradation where it conjugates Leu, Phe and, less efficiently, Met from aminoacyl-tRNAs to the N-termini of proteins containing an N-terminal arginine or lysine. The protein is Leucyl/phenylalanyl-tRNA--protein transferase of Sinorhizobium fredii (strain NBRC 101917 / NGR234).